The following is a 366-amino-acid chain: Aminomethyltransferase (366 aa).

It belongs to the GcvT family. In terms of assembly, the glycine cleavage system is composed of four proteins: P, T, L and H.

It catalyses the reaction N(6)-[(R)-S(8)-aminomethyldihydrolipoyl]-L-lysyl-[protein] + (6S)-5,6,7,8-tetrahydrofolate = N(6)-[(R)-dihydrolipoyl]-L-lysyl-[protein] + (6R)-5,10-methylene-5,6,7,8-tetrahydrofolate + NH4(+). Functionally, the glycine cleavage system catalyzes the degradation of glycine. The polypeptide is Aminomethyltransferase (Bacillus cereus (strain 03BB102)).